A 187-amino-acid polypeptide reads, in one-letter code: Elongation factor P (187 aa).

It belongs to the elongation factor P family.

The protein localises to the cytoplasm. Its pathway is protein biosynthesis; polypeptide chain elongation. Involved in peptide bond synthesis. Stimulates efficient translation and peptide-bond synthesis on native or reconstituted 70S ribosomes in vitro. Probably functions indirectly by altering the affinity of the ribosome for aminoacyl-tRNA, thus increasing their reactivity as acceptors for peptidyl transferase. The protein is Elongation factor P of Pseudarthrobacter chlorophenolicus (strain ATCC 700700 / DSM 12829 / CIP 107037 / JCM 12360 / KCTC 9906 / NCIMB 13794 / A6) (Arthrobacter chlorophenolicus).